A 194-amino-acid chain; its full sequence is Phosphoheptose isomerase (194 aa).

The SIS domain occupies Ile-37–Val-194. Substrate is bound at residue Asn-52–Gly-54. Positions 61 and 65 each coordinate Zn(2+). Residues Glu-65, Asn-93–Asp-94, Ser-119–Ser-121, Ser-124, and Gln-172 contribute to the substrate site. Gln-172 and His-180 together coordinate Zn(2+).

The protein belongs to the SIS family. GmhA subfamily. In terms of assembly, homotetramer. Zn(2+) is required as a cofactor.

It localises to the cytoplasm. The enzyme catalyses 2 D-sedoheptulose 7-phosphate = D-glycero-alpha-D-manno-heptose 7-phosphate + D-glycero-beta-D-manno-heptose 7-phosphate. It participates in carbohydrate biosynthesis; D-glycero-D-manno-heptose 7-phosphate biosynthesis; D-glycero-alpha-D-manno-heptose 7-phosphate and D-glycero-beta-D-manno-heptose 7-phosphate from sedoheptulose 7-phosphate: step 1/1. Its function is as follows. Catalyzes the isomerization of sedoheptulose 7-phosphate in D-glycero-D-manno-heptose 7-phosphate. The protein is Phosphoheptose isomerase of Actinobacillus succinogenes (strain ATCC 55618 / DSM 22257 / CCUG 43843 / 130Z).